We begin with the raw amino-acid sequence, 241 residues long: Purine nucleoside phosphorylase DeoD-type 1 (241 aa).

Histidine 5 is a binding site for a purine D-ribonucleoside. Phosphate is bound by residues glycine 21, arginine 25, arginine 44, and 88–91 (RVGS). A purine D-ribonucleoside contacts are provided by residues 180 to 182 (EME) and 204 to 205 (SD). Residue aspartate 205 is the Proton donor of the active site.

Belongs to the PNP/UDP phosphorylase family. In terms of assembly, homohexamer; trimer of homodimers.

The enzyme catalyses a purine D-ribonucleoside + phosphate = a purine nucleobase + alpha-D-ribose 1-phosphate. It carries out the reaction a purine 2'-deoxy-D-ribonucleoside + phosphate = a purine nucleobase + 2-deoxy-alpha-D-ribose 1-phosphate. Functionally, catalyzes the reversible phosphorolytic breakdown of the N-glycosidic bond in the beta-(deoxy)ribonucleoside molecules, with the formation of the corresponding free purine bases and pentose-1-phosphate. This is Purine nucleoside phosphorylase DeoD-type 1 from Vibrio cholerae serotype O1 (strain ATCC 39315 / El Tor Inaba N16961).